Consider the following 363-residue polypeptide: MKAATAIIDRRALRHNFQQIRKFAPHSRLIAVVKANAYGHGLLETAKILNQADCYGVARIGEALMLRSGGIVKPILLLEGFFSASDLPVLVANNIETAVHSEEQLQALENAGLERPIRVWMKLDTGMHRLGVRPEQAEAFYRRLCACPNVAQPVNFMSHFSCADEPDSGRTEVQLACFDDFVRGKTGEQSIAASGGILLWPQSHRDMVRPGIIMYGVSPQADLSLAADHYGLQPAMTLQSSLIAVREHKAGEPVGYGGAWVAQRDTRLGVVAIGYGDGYPRSAPSGTPVLINGREVPIVGRVSMDMISVDLGPQAADRVGDNVIMWGPGLPVEKVAACTGISAYELITKLTSRVAMEYIGEEA.

Lysine 34 functions as the Proton acceptor; specific for D-alanine in the catalytic mechanism. Lysine 34 carries the N6-(pyridoxal phosphate)lysine modification. Residue arginine 129 coordinates substrate. Residue tyrosine 256 is the Proton acceptor; specific for L-alanine of the active site. Methionine 304 contributes to the substrate binding site.

This sequence belongs to the alanine racemase family. It depends on pyridoxal 5'-phosphate as a cofactor.

The enzyme catalyses L-alanine = D-alanine. It functions in the pathway amino-acid biosynthesis; D-alanine biosynthesis; D-alanine from L-alanine: step 1/1. Catalyzes the interconversion of L-alanine and D-alanine. May also act on other amino acids. The polypeptide is Alanine racemase (alr) (Edwardsiella ictaluri (strain 93-146)).